The chain runs to 182 residues: Protein Syd (182 aa).

Belongs to the Syd family.

Its subcellular location is the cell inner membrane. Its function is as follows. Interacts with the SecY protein in vivo. May bind preferentially to an uncomplexed state of SecY, thus functioning either as a chelating agent for excess SecY in the cell or as a regulatory factor that negatively controls the translocase function. This Pectobacterium atrosepticum (strain SCRI 1043 / ATCC BAA-672) (Erwinia carotovora subsp. atroseptica) protein is Protein Syd.